Here is a 288-residue protein sequence, read N- to C-terminus: Serine/threonine-protein phosphatase PGAM5, mitochondrial (288 aa).

Residues 1–6 (MAFRQA) are Mitochondrial matrix-facing. Residues 7 to 29 (LQLAACGLAGGSAAVLFSAVAVG) form a helical membrane-spanning segment. Over 30 to 288 (KPRGGGDADT…FMPPDKITRS (259 aa)) the chain is Mitochondrial intermembrane. Positions 76 to 81 (NVESGE) are interaction with KEAP1. Ser79 and Ser86 each carry phosphoserine. 3 positions are modified to N6-acetyllysine: Lys115, Lys143, and Lys190.

The protein belongs to the phosphoglycerate mutase family. BPG-dependent PGAM subfamily. Dimer. Forms a ternary complex with NFE2L2 and KEAP1. Interacts with BCL2L1 and MAP3K5. Upon TNF-induced necrosis, forms in complex with RIPK1, RIPK3 and MLKL; the formation of this complex leads to PGAM5 phosphorylation. Isoform 2, but not isoform 1, interacts with DNM1L; this interaction leads to DNM1L dephosphorylation and activation and eventually to mitochondria fragmentation. In terms of processing, phosphorylated by the RIPK1/RIPK3 complex under necrotic conditions. This phosphorylation increases PGAM5 phosphatase activity. Proteolytically cleaved by PARL in response to loss of mitochondrial membrane potential.

The protein resides in the mitochondrion outer membrane. The protein localises to the mitochondrion inner membrane. It catalyses the reaction O-phospho-L-seryl-[protein] + H2O = L-seryl-[protein] + phosphate. The enzyme catalyses O-phospho-L-threonyl-[protein] + H2O = L-threonyl-[protein] + phosphate. Mitochondrial serine/threonine phosphatase that dephosphorylates various substrates and thus plays a role in different biological processes including cellular senescence or mitophagy. Modulates cellular senescence by regulating mitochondrial dynamics. Mechanistically, participates in mitochondrial fission through dephosphorylating DNM1L/DRP1. Additionally, dephosphorylates MFN2 in a stress-sensitive manner and consequently protects it from ubiquitination and degradation to promote mitochondrial network formation. Regulates mitophagy independent of PARKIN by interacting with and dephosphorylating FUNDC1, which interacts with LC3. Regulates anti-oxidative response by forming a tertiary complex with KEAP1 and NRF2. Regulates necroptosis by acting as a RIPK3 target and recruiting the RIPK1-RIPK3-MLKL necrosis 'attack' complex to mitochondria. The sequence is that of Serine/threonine-protein phosphatase PGAM5, mitochondrial (Pgam5) from Mus musculus (Mouse).